A 349-amino-acid chain; its full sequence is Phosphoribosylformylglycinamidine cyclo-ligase (349 aa).

It belongs to the AIR synthase family.

It is found in the cytoplasm. The catalysed reaction is 2-formamido-N(1)-(5-O-phospho-beta-D-ribosyl)acetamidine + ATP = 5-amino-1-(5-phospho-beta-D-ribosyl)imidazole + ADP + phosphate + H(+). The protein operates within purine metabolism; IMP biosynthesis via de novo pathway; 5-amino-1-(5-phospho-D-ribosyl)imidazole from N(2)-formyl-N(1)-(5-phospho-D-ribosyl)glycinamide: step 2/2. The protein is Phosphoribosylformylglycinamidine cyclo-ligase of Methanococcus maripaludis (strain C7 / ATCC BAA-1331).